The sequence spans 885 residues: Aconitate hydratase A (885 aa).

Positions 425, 491, and 494 each coordinate [4Fe-4S] cluster.

It belongs to the aconitase/IPM isomerase family. As to quaternary structure, monomer. The cofactor is [4Fe-4S] cluster.

It catalyses the reaction citrate = D-threo-isocitrate. The enzyme catalyses (2S,3R)-3-hydroxybutane-1,2,3-tricarboxylate = 2-methyl-cis-aconitate + H2O. Its pathway is carbohydrate metabolism; tricarboxylic acid cycle; isocitrate from oxaloacetate: step 2/2. It participates in organic acid metabolism; propanoate degradation. In terms of biological role, involved in the catabolism of short chain fatty acids (SCFA) via the tricarboxylic acid (TCA)(acetyl degradation route) and probably the 2-methylcitrate cycle I (propionate degradation route). Catalyzes the reversible isomerization of citrate to isocitrate via cis-aconitate. Could catalyze the hydration of 2-methyl-cis-aconitate to yield (2R,3S)-2-methylisocitrate. The apo form of AcnA functions as a RNA-binding regulatory protein. This is Aconitate hydratase A (acnA) from Rickettsia bellii (strain RML369-C).